A 390-amino-acid polypeptide reads, in one-letter code: MSIRRVMHVDLDAFFVSVEQAVRPEFKDKPVIVGGKPERRGVVAAASYEARKFGIHSGMPLITAKHLCPQAIFIEGNHQLYREYSEKFMLILSDFSPFLEPMGLDEAYLEVTGFESLHGSIAQMASKIRRRITAELGINASIGIANSKVAAKIATEQAKPNGQCEVPAGEEASFLAPLDIAVMPGIGKKTEQHLKSLGIDTLGKLAALPASFLKSCLGTYAPYLSNAAMGIDNRPVEMPSEAKSISRETTFETDTRNQTFLEAKLSYLSEKITATLRKRGKQTRVVQIKIRFADFTTLTRQKHLGQPASGNREIFQTALSLMNGILDSDRQAVRLLGVGISDFCGPEKQLEIDPAKARLEKLDASLDKIRQKYGFSSVQTGRTYRLKDMF.

The 182-residue stretch at Val6–Gly187 folds into the UmuC domain. 2 residues coordinate Mg(2+): Asp10 and Asp105. Glu106 is an active-site residue.

It belongs to the DNA polymerase type-Y family. As to quaternary structure, monomer. Mg(2+) serves as cofactor.

Its subcellular location is the cytoplasm. The catalysed reaction is DNA(n) + a 2'-deoxyribonucleoside 5'-triphosphate = DNA(n+1) + diphosphate. Its function is as follows. Poorly processive, error-prone DNA polymerase involved in untargeted mutagenesis. Copies undamaged DNA at stalled replication forks, which arise in vivo from mismatched or misaligned primer ends. These misaligned primers can be extended by PolIV. Exhibits no 3'-5' exonuclease (proofreading) activity. May be involved in translesional synthesis, in conjunction with the beta clamp from PolIII. This Dehalococcoides mccartyi (strain ATCC BAA-2100 / JCM 16839 / KCTC 5957 / BAV1) protein is DNA polymerase IV.